Here is a 633-residue protein sequence, read N- to C-terminus: Lysophospholipase 1 (633 aa).

An N-terminal signal peptide occupies residues 1–20 (MKTTTVACAVAGLLFSCVSG). A PLA2c domain is found at 47–594 (GCPASRPTIR…QRYCWDGSLN (548 aa)). N-linked (GlcNAc...) asparagine glycosylation is found at asparagine 64, asparagine 104, asparagine 139, asparagine 173, asparagine 246, asparagine 290, asparagine 329, asparagine 358, asparagine 397, asparagine 450, asparagine 463, asparagine 469, asparagine 497, asparagine 500, asparagine 521, asparagine 549, asparagine 555, and asparagine 594. A lipid anchor (GPI-like-anchor amidated serine) is attached at serine 609. Residues 610 to 633 (AASGIIPSISTVAMAVVFAAWTIF) constitute a propeptide, removed in mature form.

The protein belongs to the lysophospholipase family. In terms of processing, the GPI-like anchor contains a phosphoceramide lipid group. The anchor position has not been determined.

Its subcellular location is the cell membrane. The enzyme catalyses a 1-acyl-sn-glycero-3-phosphocholine + H2O = sn-glycerol 3-phosphocholine + a fatty acid + H(+). Catalyzes the release of fatty acids from lysophospholipids. In Aspergillus fumigatus (strain CBS 144.89 / FGSC A1163 / CEA10) (Neosartorya fumigata), this protein is Lysophospholipase 1 (plb1).